The chain runs to 590 residues: Arginine--tRNA ligase (590 aa).

Residues 130–140 (ANPTGPMHVGH) carry the 'HIGH' region motif.

This sequence belongs to the class-I aminoacyl-tRNA synthetase family. As to quaternary structure, monomer.

Its subcellular location is the cytoplasm. It carries out the reaction tRNA(Arg) + L-arginine + ATP = L-arginyl-tRNA(Arg) + AMP + diphosphate. This Methylobacterium nodulans (strain LMG 21967 / CNCM I-2342 / ORS 2060) protein is Arginine--tRNA ligase.